The sequence spans 314 residues: tRNA-cytidine(32) 2-sulfurtransferase (314 aa).

A PP-loop motif motif is present at residues 49–54; the sequence is SGGKDS. Cysteine 124, cysteine 127, and cysteine 215 together coordinate [4Fe-4S] cluster.

It belongs to the TtcA family. In terms of assembly, homodimer. Requires Mg(2+) as cofactor. [4Fe-4S] cluster is required as a cofactor.

The protein localises to the cytoplasm. The catalysed reaction is cytidine(32) in tRNA + S-sulfanyl-L-cysteinyl-[cysteine desulfurase] + AH2 + ATP = 2-thiocytidine(32) in tRNA + L-cysteinyl-[cysteine desulfurase] + A + AMP + diphosphate + H(+). It functions in the pathway tRNA modification. Functionally, catalyzes the ATP-dependent 2-thiolation of cytidine in position 32 of tRNA, to form 2-thiocytidine (s(2)C32). The sulfur atoms are provided by the cysteine/cysteine desulfurase (IscS) system. This chain is tRNA-cytidine(32) 2-sulfurtransferase, found in Histophilus somni (strain 129Pt) (Haemophilus somnus).